Consider the following 174-residue polypeptide: Probable N-acetyltransferase Rv2775 (174 aa).

Positions 6 to 172 constitute an N-acetyltransferase domain; that stretch reads IRIRAAKPID…VGYRLYRSAP (167 aa).

It belongs to the acetyltransferase family.

The sequence is that of Probable N-acetyltransferase Rv2775 from Mycobacterium tuberculosis (strain ATCC 25618 / H37Rv).